We begin with the raw amino-acid sequence, 675 residues long: Potassium-transporting ATPase ATP-binding subunit (675 aa).

Helical transmembrane passes span 38-58, 67-87, 216-236, and 253-273; these read VMFVVYLGTALTAYLTVANLV, LAITLLLLLTVLFANFAEGMA, IALSILLSGLTLIFLLAVVTL, and IALLVCLIPTTIGGLLPAIGI. Asp-304 functions as the 4-aspartylphosphate intermediate in the catalytic mechanism. ATP-binding positions include Asp-341, Glu-345, 371-378, and Lys-389; that span reads FTAQTRMS. Residues Asp-512 and Asp-516 each contribute to the Mg(2+) site. Helical transmembrane passes span 582 to 602, 610 to 630, and 654 to 674; these read FAILPALFVTAYPQLGVLNVM, AVLSAVIFNALIIPVLIPLAL, and GGILVPFIAIKLIDLLIGGLM.

This sequence belongs to the cation transport ATPase (P-type) (TC 3.A.3) family. Type IA subfamily. The system is composed of three essential subunits: KdpA, KdpB and KdpC.

The protein localises to the cell membrane. It carries out the reaction K(+)(out) + ATP + H2O = K(+)(in) + ADP + phosphate + H(+). Functionally, part of the high-affinity ATP-driven potassium transport (or Kdp) system, which catalyzes the hydrolysis of ATP coupled with the electrogenic transport of potassium into the cytoplasm. This subunit is responsible for energy coupling to the transport system and for the release of the potassium ions to the cytoplasm. The polypeptide is Potassium-transporting ATPase ATP-binding subunit (Deinococcus radiodurans (strain ATCC 13939 / DSM 20539 / JCM 16871 / CCUG 27074 / LMG 4051 / NBRC 15346 / NCIMB 9279 / VKM B-1422 / R1)).